We begin with the raw amino-acid sequence, 414 residues long: Tryptophan synthase beta chain (414 aa).

Residues 1 to 26 (MVSTFSRQDQNYKNDDLNQPSKEGRF) form a disordered region. The segment covering 10 to 26 (QNYKNDDLNQPSKEGRF) has biased composition (basic and acidic residues). K109 carries the post-translational modification N6-(pyridoxal phosphate)lysine.

The protein belongs to the TrpB family. Tetramer of two alpha and two beta chains. It depends on pyridoxal 5'-phosphate as a cofactor.

The catalysed reaction is (1S,2R)-1-C-(indol-3-yl)glycerol 3-phosphate + L-serine = D-glyceraldehyde 3-phosphate + L-tryptophan + H2O. It functions in the pathway amino-acid biosynthesis; L-tryptophan biosynthesis; L-tryptophan from chorismate: step 5/5. In terms of biological role, the beta subunit is responsible for the synthesis of L-tryptophan from indole and L-serine. This is Tryptophan synthase beta chain from Prochlorococcus marinus (strain MIT 9312).